Consider the following 559-residue polypeptide: Acetylcholinesterase-1 (559 aa).

Positions 1–21 are cleaved as a signal peptide; sequence MMLPRCFVTVLLMSSVLYIGG. The cysteines at positions 92 and 114 are disulfide-linked. Residue 142–143 participates in substrate binding; it reads GG. S223 acts as the Acyl-ester intermediate in catalysis. S223 is subject to Phosphoserine. C276 and C293 are oxidised to a cystine. N-linked (GlcNAc...) asparagine glycosylation is found at N278 and N342. The Charge relay system role is filled by E354. N374 carries N-linked (GlcNAc...) asparagine glycosylation. An intrachain disulfide couples C432 to C550. Residue H471 is the Charge relay system of the active site.

It belongs to the type-B carboxylesterase/lipase family. In terms of tissue distribution, expressed by the venom gland.

The protein localises to the secreted. The catalysed reaction is acetylcholine + H2O = choline + acetate + H(+). Functionally, terminates signal transduction at the neuromuscular junction by rapid hydrolysis of the acetylcholine released into the synaptic cleft. The protein is Acetylcholinesterase-1 of Trittame loki (Brush-footed trapdoor spider).